Consider the following 253-residue polypeptide: 1-(5-phosphoribosyl)-5-[(5-phosphoribosylamino)methylideneamino] imidazole-4-carboxamide isomerase (253 aa).

The active-site Proton acceptor is Asp-8. Asp-131 functions as the Proton donor in the catalytic mechanism.

The protein belongs to the HisA/HisF family.

The protein localises to the cytoplasm. The enzyme catalyses 1-(5-phospho-beta-D-ribosyl)-5-[(5-phospho-beta-D-ribosylamino)methylideneamino]imidazole-4-carboxamide = 5-[(5-phospho-1-deoxy-D-ribulos-1-ylimino)methylamino]-1-(5-phospho-beta-D-ribosyl)imidazole-4-carboxamide. It functions in the pathway amino-acid biosynthesis; L-histidine biosynthesis; L-histidine from 5-phospho-alpha-D-ribose 1-diphosphate: step 4/9. The chain is 1-(5-phosphoribosyl)-5-[(5-phosphoribosylamino)methylideneamino] imidazole-4-carboxamide isomerase from Polynucleobacter asymbioticus (strain DSM 18221 / CIP 109841 / QLW-P1DMWA-1) (Polynucleobacter necessarius subsp. asymbioticus).